The sequence spans 501 residues: Sucrose transport protein SUT2 (501 aa).

Residues methionine 1–alanine 31 are Cytoplasmic-facing. A helical transmembrane segment spans residues serine 32–valine 52. The Extracellular segment spans residues glutamine 53–leucine 55. A helical membrane pass occupies residues glycine 56–valine 76. Residues glutamine 77–arginine 98 are Cytoplasmic-facing. The chain crosses the membrane as a helical span at residues proline 99–alanine 119. Residues aspartate 120–arginine 135 lie on the Extracellular side of the membrane. Residues leucine 136–threonine 156 traverse the membrane as a helical segment. Residues glutamine 157–arginine 176 lie on the Cytoplasmic side of the membrane. Residues isoleucine 177 to glycine 197 traverse the membrane as a helical segment. At alanine 198–lysine 222 the chain is on the extracellular side. Residues serine 223–valine 243 form a helical membrane-spanning segment. The Cytoplasmic segment spans residues glutamine 244–proline 278. Residues valine 279–phenylalanine 299 traverse the membrane as a helical segment. Residues aspartate 300 to arginine 327 lie on the Extracellular side of the membrane. A helical membrane pass occupies residues methionine 328–glutamate 348. Topologically, residues lysine 349–alanine 356 are cytoplasmic. The chain crosses the membrane as a helical span at residues glycine 357–isoleucine 377. The Extracellular segment spans residues threonine 378–threonine 394. The chain crosses the membrane as a helical span at residues glycine 395–tyrosine 415. Residues serine 416–glutamine 433 lie on the Cytoplasmic side of the membrane. The helical transmembrane segment at glycine 434 to glycine 454 threads the bilayer. The Extracellular portion of the chain corresponds to serine 455–alanine 467. Residues proline 468–leucine 488 form a helical membrane-spanning segment. Over proline 489–arginine 501 the chain is Cytoplasmic.

It belongs to the glycoside-pentoside-hexuronide (GPH) cation symporter transporter (TC 2.A.2.4) family. As to quaternary structure, homodimer. In terms of tissue distribution, widely expressed.

It localises to the cell membrane. It functions in the pathway glycan biosynthesis; sucrose metabolism. Responsible for the transport of sucrose into the cell, with the concomitant uptake of protons (symport system). May also transport other glucosides. The sequence is that of Sucrose transport protein SUT2 (SUT2) from Oryza sativa subsp. japonica (Rice).